Here is a 349-residue protein sequence, read N- to C-terminus: Histidinol-phosphate aminotransferase 1 (349 aa).

Residue Lys-213 is modified to N6-(pyridoxal phosphate)lysine.

The protein belongs to the class-II pyridoxal-phosphate-dependent aminotransferase family. Histidinol-phosphate aminotransferase subfamily. In terms of assembly, homodimer. Pyridoxal 5'-phosphate serves as cofactor.

It catalyses the reaction L-histidinol phosphate + 2-oxoglutarate = 3-(imidazol-4-yl)-2-oxopropyl phosphate + L-glutamate. It participates in amino-acid biosynthesis; L-histidine biosynthesis; L-histidine from 5-phospho-alpha-D-ribose 1-diphosphate: step 7/9. In Carboxydothermus hydrogenoformans (strain ATCC BAA-161 / DSM 6008 / Z-2901), this protein is Histidinol-phosphate aminotransferase 1.